A 572-amino-acid polypeptide reads, in one-letter code: Butyrate--CoA ligase AAE11, peroxisomal (572 aa).

The short motif at 570 to 572 (SRL) is the Microbody targeting signal element.

It belongs to the ATP-dependent AMP-binding enzyme family. As to expression, expressed in flowers.

It is found in the peroxisome. The catalysed reaction is a medium-chain fatty acid + ATP + CoA = a medium-chain fatty acyl-CoA + AMP + diphosphate. Functionally, butyrate--CoA ligase that is active in vitro with medium-chain fatty acids, with a preference for hexanoate and octanoate. The protein is Butyrate--CoA ligase AAE11, peroxisomal (AAE11) of Arabidopsis thaliana (Mouse-ear cress).